The sequence spans 272 residues: Putative phosphoenolpyruvate synthase regulatory protein (272 aa).

152-159 (GVSRCGKT) contacts ADP.

This sequence belongs to the pyruvate, phosphate/water dikinase regulatory protein family. PSRP subfamily.

The catalysed reaction is [pyruvate, water dikinase] + ADP = [pyruvate, water dikinase]-phosphate + AMP + H(+). It carries out the reaction [pyruvate, water dikinase]-phosphate + phosphate + H(+) = [pyruvate, water dikinase] + diphosphate. Its function is as follows. Bifunctional serine/threonine kinase and phosphorylase involved in the regulation of the phosphoenolpyruvate synthase (PEPS) by catalyzing its phosphorylation/dephosphorylation. The protein is Putative phosphoenolpyruvate synthase regulatory protein of Ectopseudomonas mendocina (strain ymp) (Pseudomonas mendocina).